The sequence spans 258 residues: Neurotrophin-3 (258 aa).

The first 18 residues, 1-18 (MSILFYVIFLAYLRGIQG), serve as a signal peptide directing secretion. Residues 19 to 139 (NNMDQRSLPE…TNRTSPRRKR (121 aa)) constitute a propeptide that is removed on maturation. Residues 60–85 (QSTLPKAEAPREPEQGEATRSEFQPM) form a disordered region. Basic and acidic residues predominate over residues 67 to 79 (EAPREPEQGEATR). Asparagine 131 carries an N-linked (GlcNAc...) asparagine glycan. Cystine bridges form between cysteine 153-cysteine 218, cysteine 196-cysteine 247, and cysteine 206-cysteine 249.

This sequence belongs to the NGF-beta family. In terms of tissue distribution, brain and peripheral tissues.

It localises to the secreted. Functionally, seems to promote the survival of visceral and proprioceptive sensory neurons. This chain is Neurotrophin-3 (Ntf3), found in Rattus norvegicus (Rat).